The chain runs to 60 residues: LKCNQLIPPFWKTCPKGKNLCYKMTMRGASKVPVKRGCIDVCPKSSLLIKYMCCNTDKCN.

Disulfide bonds link Cys-3/Cys-21, Cys-14/Cys-38, Cys-42/Cys-53, and Cys-54/Cys-59.

The protein belongs to the three-finger toxin family. Short-chain subfamily. Type IA cytotoxin sub-subfamily. In terms of assembly, monomer in solution; Homodimer and oligomer in the presence of negatively charged lipids forming a pore with a size ranging between 20 and 30 Angstroms. As to expression, expressed by the venom gland.

It is found in the secreted. The protein resides in the target cell membrane. In terms of biological role, shows cytolytic activity on many different cells by forming pore in lipid membranes. In vivo, increases heart rate or kills the animal by cardiac arrest. In addition, it binds to heparin with high affinity, interacts with Kv channel-interacting protein 1 (KCNIP1) in a calcium-independent manner, and binds to integrin alpha-V/beta-3 (ITGAV/ITGB3) with moderate affinity. The polypeptide is Cytotoxin 2 (Naja mossambica (Mozambique spitting cobra)).